Reading from the N-terminus, the 404-residue chain is Probable tRNA sulfurtransferase (404 aa).

Positions 60–165 constitute a THUMP domain; the sequence is QPIVEALKLV…DEAAYISYEE (106 aa). Residues 183 to 184, 208 to 209, R265, G287, and Q296 each bind ATP; these read ML and HF.

Belongs to the ThiI family.

It localises to the cytoplasm. The catalysed reaction is [ThiI sulfur-carrier protein]-S-sulfanyl-L-cysteine + a uridine in tRNA + 2 reduced [2Fe-2S]-[ferredoxin] + ATP + H(+) = [ThiI sulfur-carrier protein]-L-cysteine + a 4-thiouridine in tRNA + 2 oxidized [2Fe-2S]-[ferredoxin] + AMP + diphosphate. It carries out the reaction [ThiS sulfur-carrier protein]-C-terminal Gly-Gly-AMP + S-sulfanyl-L-cysteinyl-[cysteine desulfurase] + AH2 = [ThiS sulfur-carrier protein]-C-terminal-Gly-aminoethanethioate + L-cysteinyl-[cysteine desulfurase] + A + AMP + 2 H(+). The protein operates within cofactor biosynthesis; thiamine diphosphate biosynthesis. Functionally, catalyzes the ATP-dependent transfer of a sulfur to tRNA to produce 4-thiouridine in position 8 of tRNAs, which functions as a near-UV photosensor. Also catalyzes the transfer of sulfur to the sulfur carrier protein ThiS, forming ThiS-thiocarboxylate. This is a step in the synthesis of thiazole, in the thiamine biosynthesis pathway. The sulfur is donated as persulfide by IscS. This chain is Probable tRNA sulfurtransferase, found in Streptococcus pyogenes serotype M1.